We begin with the raw amino-acid sequence, 414 residues long: Tyrosine--tRNA ligase (414 aa).

Residue Tyr-38 participates in L-tyrosine binding. The short motif at 43 to 52 is the 'HIGH' region element; it reads PTATSLHLGN. L-tyrosine-binding residues include Tyr-165 and Gln-169. The short motif at 228–232 is the 'KMSKS' region element; that stretch reads KFGKS. Lys-231 lines the ATP pocket. One can recognise an S4 RNA-binding domain in the interval 349-414; it reads FNANQIIDLG…KKYFFMIELI (66 aa).

The protein belongs to the class-I aminoacyl-tRNA synthetase family. TyrS type 1 subfamily. As to quaternary structure, homodimer.

The protein localises to the cytoplasm. It carries out the reaction tRNA(Tyr) + L-tyrosine + ATP = L-tyrosyl-tRNA(Tyr) + AMP + diphosphate + H(+). Its function is as follows. Catalyzes the attachment of tyrosine to tRNA(Tyr) in a two-step reaction: tyrosine is first activated by ATP to form Tyr-AMP and then transferred to the acceptor end of tRNA(Tyr). This Mesomycoplasma hyopneumoniae (strain 7448) (Mycoplasma hyopneumoniae) protein is Tyrosine--tRNA ligase.